Here is a 115-residue protein sequence, read N- to C-terminus: SPbeta prophage-derived uncharacterized protein YoqS (115 aa).

In Bacillus subtilis (strain 168), this protein is SPbeta prophage-derived uncharacterized protein YoqS (yoqS).